Here is a 177-residue protein sequence, read N- to C-terminus: Large ribosomal subunit protein uL6 (177 aa).

The protein belongs to the universal ribosomal protein uL6 family. Part of the 50S ribosomal subunit.

Its function is as follows. This protein binds to the 23S rRNA, and is important in its secondary structure. It is located near the subunit interface in the base of the L7/L12 stalk, and near the tRNA binding site of the peptidyltransferase center. The sequence is that of Large ribosomal subunit protein uL6 from Sinorhizobium medicae (strain WSM419) (Ensifer medicae).